A 253-amino-acid polypeptide reads, in one-letter code: Trans-aconitate 2-methyltransferase (253 aa).

It belongs to the methyltransferase superfamily. Tam family.

The protein localises to the cytoplasm. The catalysed reaction is trans-aconitate + S-adenosyl-L-methionine = (E)-3-(methoxycarbonyl)pent-2-enedioate + S-adenosyl-L-homocysteine. Its function is as follows. Catalyzes the S-adenosylmethionine monomethyl esterification of trans-aconitate. In Azoarcus sp. (strain BH72), this protein is Trans-aconitate 2-methyltransferase.